A 109-amino-acid chain; its full sequence is Stress-response A/B barrel domain-containing protein HS1 (109 aa).

In terms of domain architecture, Stress-response A/B barrel spans 8–102 (VKHVLLASFK…SLDKVLVIDY (95 aa)). The Mg(2+) site is built by Val-36, Ile-39, Glu-40, and Met-42.

Homodimer. It depends on Mg(2+) as a cofactor.

Functionally, heat stable protein involved in defense against fungal pathogens. Possesses antifungal activity against diverse pathogenic fungi. Possesses antimicrobial activity. Possesses ribonuclease activity. This chain is Stress-response A/B barrel domain-containing protein HS1, found in Arabidopsis thaliana (Mouse-ear cress).